The chain runs to 680 residues: Pescadillo homolog (680 aa).

Residues 315–336 are disordered; that stretch reads GEDEKPKAITNGEGESETPTDA. In terms of domain architecture, BRCT spans 359-471; sequence DPSQLFANCT…ELKEPNQYAP (113 aa). A disordered region spans residues 494–680; it reads VPLEEQQTEA…ERKMAKGKAT (187 aa). Composition is skewed to acidic residues over residues 511–530, 543–556, and 565–576; these read DVED…DDEA, GSDD…EEAD, and AEVDDASEDDEQ. Composition is skewed to basic and acidic residues over residues 597-610, 617-635, and 654-664; these read KASE…DPKS, RKEL…ERAK, and NKKDAESEKLR. A coiled-coil region spans residues 609–680; that stretch reads KSKAKQQKRK…ERKMAKGKAT (72 aa). Residues 665–680 are compositionally biased toward basic residues; the sequence is EKRRRIERKMAKGKAT.

Belongs to the pescadillo family. As to quaternary structure, component of the NOP7 complex, composed of ERB1, NOP7 and YTM1. The complex is held together by ERB1, which interacts with NOP7 via its N-terminal domain and with YTM1 via a high-affinity interaction between the seven-bladed beta-propeller domains of the 2 proteins. The NOP7 complex associates with the 66S pre-ribosome.

The protein localises to the nucleus. It localises to the nucleolus. The protein resides in the nucleoplasm. In terms of biological role, component of the NOP7 complex, which is required for maturation of the 25S and 5.8S ribosomal RNAs and formation of the 60S ribosome. This Pyricularia oryzae (strain 70-15 / ATCC MYA-4617 / FGSC 8958) (Rice blast fungus) protein is Pescadillo homolog.